A 103-amino-acid polypeptide reads, in one-letter code: uncharacterized protein (103 aa).

Disordered stretches follow at residues 1-20 and 44-71; these read MIELSYAPDVAGRRSNWPKG and LERMASDTHGGGGGRPVTPPPPGMHHLG. An N-terminal signal peptide occupies residues 1–34; that stretch reads MIELSYAPDVAGRRSNWPKGSGVNTWTAIRWTFA.

This is an uncharacterized protein from Mycobacterium tuberculosis (strain CDC 1551 / Oshkosh).